The primary structure comprises 395 residues: Outer membrane protein assembly factor BamB (395 aa).

The first 20 residues, 1 to 20 (MKSWCKNLLAAGLSLAMLSA), serve as a signal peptide directing secretion. C21 carries the N-palmitoyl cysteine lipid modification. The S-diacylglycerol cysteine moiety is linked to residue C21.

It belongs to the BamB family. Part of the Bam complex.

The protein localises to the cell outer membrane. In terms of biological role, part of the outer membrane protein assembly complex, which is involved in assembly and insertion of beta-barrel proteins into the outer membrane. This Shewanella oneidensis (strain ATCC 700550 / JCM 31522 / CIP 106686 / LMG 19005 / NCIMB 14063 / MR-1) protein is Outer membrane protein assembly factor BamB.